The primary structure comprises 250 residues: Triosephosphate isomerase (250 aa).

9 to 11 (NWK) contributes to the substrate binding site. Residue His94 is the Electrophile of the active site. Glu165 (proton acceptor) is an active-site residue. Substrate contacts are provided by residues Gly171, Ser211, and 232 to 233 (GG).

This sequence belongs to the triosephosphate isomerase family. In terms of assembly, homodimer.

The protein resides in the cytoplasm. It catalyses the reaction D-glyceraldehyde 3-phosphate = dihydroxyacetone phosphate. Its pathway is carbohydrate biosynthesis; gluconeogenesis. The protein operates within carbohydrate degradation; glycolysis; D-glyceraldehyde 3-phosphate from glycerone phosphate: step 1/1. In terms of biological role, involved in the gluconeogenesis. Catalyzes stereospecifically the conversion of dihydroxyacetone phosphate (DHAP) to D-glyceraldehyde-3-phosphate (G3P). The protein is Triosephosphate isomerase of Alkalilimnicola ehrlichii (strain ATCC BAA-1101 / DSM 17681 / MLHE-1).